A 161-amino-acid polypeptide reads, in one-letter code: RNA pyrophosphohydrolase (161 aa).

Residues 7–149 (KYRPCVGIML…KKEVYKTVIE (143 aa)) enclose the Nudix hydrolase domain. Residues 40 to 61 (GGIDDGEKLEQAALRELLEEVG) carry the Nudix box motif.

This sequence belongs to the Nudix hydrolase family. RppH subfamily. A divalent metal cation serves as cofactor.

Its function is as follows. Accelerates the degradation of transcripts by removing pyrophosphate from the 5'-end of triphosphorylated RNA, leading to a more labile monophosphorylated state that can stimulate subsequent ribonuclease cleavage. This is RNA pyrophosphohydrolase from Wolbachia sp. subsp. Brugia malayi (strain TRS).